A 253-amino-acid polypeptide reads, in one-letter code: Imidazole glycerol phosphate synthase subunit HisF (253 aa).

Residues Asp-11 and Asp-130 contribute to the active site.

It belongs to the HisA/HisF family. Heterodimer of HisH and HisF.

It localises to the cytoplasm. It catalyses the reaction 5-[(5-phospho-1-deoxy-D-ribulos-1-ylimino)methylamino]-1-(5-phospho-beta-D-ribosyl)imidazole-4-carboxamide + L-glutamine = D-erythro-1-(imidazol-4-yl)glycerol 3-phosphate + 5-amino-1-(5-phospho-beta-D-ribosyl)imidazole-4-carboxamide + L-glutamate + H(+). Its pathway is amino-acid biosynthesis; L-histidine biosynthesis; L-histidine from 5-phospho-alpha-D-ribose 1-diphosphate: step 5/9. Its function is as follows. IGPS catalyzes the conversion of PRFAR and glutamine to IGP, AICAR and glutamate. The HisF subunit catalyzes the cyclization activity that produces IGP and AICAR from PRFAR using the ammonia provided by the HisH subunit. This chain is Imidazole glycerol phosphate synthase subunit HisF, found in Clostridium beijerinckii (strain ATCC 51743 / NCIMB 8052) (Clostridium acetobutylicum).